A 326-amino-acid chain; its full sequence is GTPase Obg (326 aa).

Residues 1–159 (MKFVDSAKIY…LEIELELKLM (159 aa)) form the Obg domain. A disordered region spans residues 119–138 (EGGKGGKGNPHFASSTRQAP). In terms of domain architecture, OBG-type G spans 160 to 323 (ADVGLVGFPN…LKDELWSRVK (164 aa)). Residues 166 to 173 (GFPNAGKS), 191 to 195 (FTTLV), 213 to 216 (DIPG), 280 to 283 (TKMD), and 304 to 306 (SSV) contribute to the GTP site. Residues serine 173 and threonine 193 each coordinate Mg(2+).

Belongs to the TRAFAC class OBG-HflX-like GTPase superfamily. OBG GTPase family. In terms of assembly, monomer. Mg(2+) is required as a cofactor.

The protein localises to the cytoplasm. An essential GTPase which binds GTP, GDP and possibly (p)ppGpp with moderate affinity, with high nucleotide exchange rates and a fairly low GTP hydrolysis rate. Plays a role in control of the cell cycle, stress response, ribosome biogenesis and in those bacteria that undergo differentiation, in morphogenesis control. In Chlorobium phaeobacteroides (strain BS1), this protein is GTPase Obg.